Here is an 82-residue protein sequence, read N- to C-terminus: Chaplin-E (82 aa).

A signal peptide spans 1–27 (MKNLKKAAAVTMVAGGLIAAGAGMASA). In terms of domain architecture, Chaplin spans 41–81 (SPGVASGNLVQAPIHIPVNAVGNSVNVIGVLNPAFGNLGVN).

The protein belongs to the chaplin family. Short chaplin subfamily.

It is found in the cell surface. It localises to the secreted. The protein localises to the cell wall. Its subcellular location is the fimbrium. Its function is as follows. One of 8 partially redundant surface-active proteins required for efficient formation of aerial mycelium; the short chaplins assemble into a hydrophobic, amyloidal fibrillar surface layer that envelopes and protects aerial hyphae and spores, presumably anchored to the long chaplins. Chaplins have an overlapping function with the surface-active SapB peptide; chaplins are essential on minimal medium while on rich medium both chaplins and SapB are required for efficient aerial hyphae formation. Chaplins are also involved in cell attachment to a hydrophobic surface. Forms amyloid fibrils in vitro probably composed of stacked beta-sheets, at low extracellular concentrations individually restores the ability to form aerial hyphae to a chaplin-deficient strain, but does so less well than other short chaplins. A small chaplin extract (ChpD, ChpE, ChpF, ChpG and ChpH) self-assembles into 2 different amyloids; small fibrils at the air-water interface form an amphipathic membrane that resembles spore-surface structures involved in aerial hyphae formation, and hydrophilic fibrils in solution that resemble the fibers that attach cells to a hydrophobic surface. At the air-water interface the hydrophilic surface is in contact with water (probably equivalent to the peptidoglycan layer), while the hydrophobic face is exposed to the air, making the surface of the aerial hyphae hydrophobic. A minimal chaplin strain capable of forming aerial mycelium/hyphae on minimal medium contains ChpC, ChpE and ChpH. The strain also has restored rodlet formation on the hyphae surface. A second strain with ChpA, ChpD and ChpE makes slightly less robust hyphae. This essential chaplin may coordinate the assembly and/or polymerization of the other chaplins. A small chaplin extract applied to a chaplin-deficient strain restores aerial hyphae formation. The small chaplin extract forms an amyloid-like structure similar to that seen on the surface of cells without rodlets (rdlA-rdlB deletions), and is highly surface active, reducing surface tension from 72 to 26 mJ/m(2), which probably allows escape of hyphae from an aqueous environment into air. This is Chaplin-E from Streptomyces coelicolor (strain ATCC BAA-471 / A3(2) / M145).